Consider the following 443-residue polypeptide: Histidinol dehydrogenase (443 aa).

NAD(+)-binding residues include Tyr-133, Gln-191, and Asn-214. Substrate contacts are provided by Ser-240, Gln-262, and His-265. 2 residues coordinate Zn(2+): Gln-262 and His-265. Active-site proton acceptor residues include Glu-329 and His-330. His-330, Asp-363, Glu-417, and His-422 together coordinate substrate. Asp-363 serves as a coordination point for Zn(2+). His-422 lines the Zn(2+) pocket.

This sequence belongs to the histidinol dehydrogenase family. In terms of assembly, homodimer. Requires Zn(2+) as cofactor.

The enzyme catalyses L-histidinol + 2 NAD(+) + H2O = L-histidine + 2 NADH + 3 H(+). Its pathway is amino-acid biosynthesis; L-histidine biosynthesis; L-histidine from 5-phospho-alpha-D-ribose 1-diphosphate: step 9/9. Its function is as follows. Catalyzes the sequential NAD-dependent oxidations of L-histidinol to L-histidinaldehyde and then to L-histidine. This is Histidinol dehydrogenase from Blochmanniella pennsylvanica (strain BPEN).